A 391-amino-acid polypeptide reads, in one-letter code: MVKETEYYDILGIKPEATPTEIKKAYRRKAMETHPDKHPDDPDAQAKFQAVGEAYQVLSDPGLRSKYDQFGKEDAVPQQGFEDASEYFTAIFGGDGFKDWIGEFSLFKELNEATEMFGKEDEEGTAATETEKADESTDGGMVKHDTNKAESLKKDKLSKEQREKLMEMEKKRREDMMKQVDELAEKLNEKISRYLIAVKSNNLEEFTRKLDQEIEDLKLESFGLELLYLLARVYKTKANNFIMSKKTYGISKIFTGTRDNARSVKSAYNLLSTGLEAQKAMEKMSEVNTDELDQYERAKFESTMAGKALGVMWAMSKFELERKLKDVCNKILNDKKVPSKERIAKAKAMLFIAHKFASARRSPEEAEEARVFEELILGEQEKEHKKHTVAR.

Residues 4–73 enclose the J domain; it reads ETEYYDILGI…RSKYDQFGKE (70 aa). Positions 119-161 are disordered; the sequence is KEDEEGTAATETEKADESTDGGMVKHDTNKAESLKKDKLSKEQ. A compositionally biased stretch (basic and acidic residues) spans 129–161; that stretch reads ETEKADESTDGGMVKHDTNKAESLKKDKLSKEQ. Lys132 is covalently cross-linked (Glycyl lysine isopeptide (Lys-Gly) (interchain with G-Cter in ubiquitin)).

The chain is Protein CAJ1 (CAJ1) from Saccharomyces cerevisiae (strain ATCC 204508 / S288c) (Baker's yeast).